The sequence spans 110 residues: Large ribosomal subunit protein uL22 (110 aa).

The protein belongs to the universal ribosomal protein uL22 family. As to quaternary structure, part of the 50S ribosomal subunit.

In terms of biological role, this protein binds specifically to 23S rRNA; its binding is stimulated by other ribosomal proteins, e.g. L4, L17, and L20. It is important during the early stages of 50S assembly. It makes multiple contacts with different domains of the 23S rRNA in the assembled 50S subunit and ribosome. The globular domain of the protein is located near the polypeptide exit tunnel on the outside of the subunit, while an extended beta-hairpin is found that lines the wall of the exit tunnel in the center of the 70S ribosome. The chain is Large ribosomal subunit protein uL22 from Paracidovorax citrulli (strain AAC00-1) (Acidovorax citrulli).